The primary structure comprises 614 residues: Threonine--tRNA ligase (614 aa).

The segment at 1–138 is editing domain; sequence MRILTIHARK…PLSELSKTIR (138 aa). Catalytic regions lie at residues 195 to 492 and 196 to 492; these read NRVN…PYIP and RVND…PYIP. Zn(2+) contacts are provided by C289, H340, and H461.

The protein belongs to the class-II aminoacyl-tRNA synthetase family. In terms of assembly, homodimer. The cofactor is Zn(2+).

It localises to the cytoplasm. The catalysed reaction is tRNA(Thr) + L-threonine + ATP = L-threonyl-tRNA(Thr) + AMP + diphosphate + H(+). Its function is as follows. Catalyzes the attachment of threonine to tRNA(Thr) in a two-step reaction: L-threonine is first activated by ATP to form Thr-AMP and then transferred to the acceptor end of tRNA(Thr). Also edits incorrectly charged L-seryl-tRNA(Thr). The chain is Threonine--tRNA ligase from Staphylothermus marinus (strain ATCC 43588 / DSM 3639 / JCM 9404 / F1).